The following is an 823-amino-acid chain: ATP-dependent DNA helicase At3g02060, chloroplastic (823 aa).

Residues 1 to 53 constitute a chloroplast transit peptide; sequence MMSLLPNPDPITVPLVLKLCSFPPPRRLFSLRLRRFTRKSSSLLPLVAVSSLS. The region spanning 285-447 is the Helicase ATP-binding domain; the sequence is LTERETPMDR…LTGFRDASLI (163 aa). 298–305 serves as a coordination point for ATP; that stretch reads GDVGFGKT. A DEEQ box motif is present at residues 400-403; that stretch reads DEEQ. One can recognise a Helicase C-terminal domain in the interval 465-622; the sequence is RKEKVIEAIK…GFQLAEKDMG (158 aa).

The protein belongs to the helicase family.

It localises to the plastid. The protein localises to the chloroplast. The catalysed reaction is ATP + H2O = ADP + phosphate + H(+). The protein is ATP-dependent DNA helicase At3g02060, chloroplastic of Arabidopsis thaliana (Mouse-ear cress).